The chain runs to 226 residues: Ribonuclease 3 (226 aa).

One can recognise an RNase III domain in the interval 6–128 (INRLQRKLGY…LIGGVFLDSN (123 aa)). Mg(2+) is bound at residue glutamate 41. Residue aspartate 45 is part of the active site. Residues aspartate 114 and glutamate 117 each coordinate Mg(2+). The active site involves glutamate 117. The DRBM domain maps to 155–225 (DPKTRLQEYL…AEQALKKLEL (71 aa)).

It belongs to the ribonuclease III family. Homodimer. Mg(2+) is required as a cofactor.

It is found in the cytoplasm. The catalysed reaction is Endonucleolytic cleavage to 5'-phosphomonoester.. Functionally, digests double-stranded RNA. Involved in the processing of primary rRNA transcript to yield the immediate precursors to the large and small rRNAs (23S and 16S). Processes some mRNAs, and tRNAs when they are encoded in the rRNA operon. Processes pre-crRNA and tracrRNA of type II CRISPR loci if present in the organism. This Salmonella enteritidis PT4 (strain P125109) protein is Ribonuclease 3.